The sequence spans 146 residues: UPF0260 protein VF_1660 (146 aa).

This sequence belongs to the UPF0260 family.

This Aliivibrio fischeri (strain ATCC 700601 / ES114) (Vibrio fischeri) protein is UPF0260 protein VF_1660.